Consider the following 176-residue polypeptide: Sigma intracellular receptor 2 (176 aa).

Topologically, residues 1-9 (MGTLGARRG) are cytoplasmic. A helical transmembrane segment spans residues 10–30 (LEWFLGFYFLSHIPITLLMDL). An EXPERA domain is found at 10–158 (LEWFLGFYFL…PYFLIPLILL (149 aa)). Topologically, residues 31–68 (QGVLPRDLYPVELRNLQQWYIEEFKDPLLQTPPAWFKS) are lumenal. The helical transmembrane segment at 69–89 (FLFCELVFQLPFFPIAAYAFF) threads the bilayer. The cholesterol site is built by Val75 and Gln77. At 90–99 (KGGCKWIRTP) the chain is on the cytoplasmic side. Residues 100-120 (AIIYSVHTMTTLIPILSTLLL) traverse the membrane as a helical segment. Over 121–141 (DDFSKASHFRGQGPKTFQERL) the chain is Lumenal. Residues 142–162 (FLISVYIPYFLIPLILLLFMV) form a helical membrane-spanning segment. At 163 to 176 (RNPYYKSEEKRKKK) the chain is on the cytoplasmic side. An ER retention motif motif is present at residues 172-176 (KRKKK).

Belongs to the TMEM97/sigma-2 receptor family. In terms of assembly, homodimer. Interacts with NPC1; the interaction impairs NPC1-mediated cholesterol transport. Interacts with PGRMC1 and LDLR; the interaction increases LDL internalization. Interacts with histatin 1/HTN1; the interaction induces HTN1-stimulating wound healing. Interacts with TSPO.

The protein localises to the rough endoplasmic reticulum membrane. Its subcellular location is the nucleus membrane. In terms of biological role, sigma-2 receptor which contributes to ameliorate dysfunctional cellular processes and slow degenerative progression by regulating cell functions including cholesterol biosynthesis/trafficking, membrane trafficking, autophagy, lipid membrane-bound protein trafficking, and receptor stabilization at the cell surface. Forms a ternary complex with PGRMC1 receptor and low density lipoprotein receptor/LDLR at the plasma membrane, which increases LDLR-mediated LDL cholesterol internalization. Decreases lysosomal sterol transporter NPC1 availability to the cell, probably through NPC1-binding, hence controlling lipid transport, including cholesterol and LBPA, outside of late endosome/lysosome. Binds regio- and stereoselective ligand 20(S)-hydroxycholesterol (20(S)-OHC) which enhances TMEM97-NPC1 interaction and decreases TMEM97-PGRMC1 and TMEM97-TSPO interactions, thereby linking OHC binding to cholesterol homeostasis. Also able to bind cholesterol. Binds histatin 1 (Hst 1)/HN1 salivary peptide at the ER membrane, which is critical for increasing mitochondria-ER contacts and stimulating Hst1 wound healing properties. May alter the activity of some cytochrome P450 proteins. Although shows homologies with sterol isomerases (EXPERA domain), not able to catalyze sterol isomerization. However, may act as sensors of these molecules. Acts as a quality control factor in the ER, promoting the proteolytic degradation of nonproductive and extramitochondrial precursor proteins in the ER membrane thus removing them from the ER surface. The polypeptide is Sigma intracellular receptor 2 (TMEM97) (Bos taurus (Bovine)).